A 569-amino-acid chain; its full sequence is Oxygen-dependent choline dehydrogenase (569 aa).

9–38 provides a ligand contact to FAD; that stretch reads DYVIIGGGSAGSVLGNRLSEDKDKEVLVLE. Histidine 475 (proton acceptor) is an active-site residue.

This sequence belongs to the GMC oxidoreductase family. FAD is required as a cofactor.

It carries out the reaction choline + A = betaine aldehyde + AH2. The enzyme catalyses betaine aldehyde + NAD(+) + H2O = glycine betaine + NADH + 2 H(+). It functions in the pathway amine and polyamine biosynthesis; betaine biosynthesis via choline pathway; betaine aldehyde from choline (cytochrome c reductase route): step 1/1. Functionally, involved in the biosynthesis of the osmoprotectant glycine betaine. Catalyzes the oxidation of choline to betaine aldehyde and betaine aldehyde to glycine betaine at the same rate. This chain is Oxygen-dependent choline dehydrogenase, found in Staphylococcus aureus (strain MSSA476).